Here is an 81-residue protein sequence, read N- to C-terminus: Elicitor peptide 4 (81 aa).

Residues 1 to 54 constitute a propeptide that is removed on maturation; that stretch reads MERGVSYYLWIPFKFIHQTFGSLLLKLLGLRSPSDHSFPEDGEEEVKVVEVSSR. Positions 57-81 are disordered; that stretch reads PGKKNVLKKSRESSGKPGGTNKKPF.

This sequence belongs to the brassicaceae elicitor peptide family.

Elicitor of plant defense. The chain is Elicitor peptide 4 (PEP4) from Arabidopsis thaliana (Mouse-ear cress).